A 160-amino-acid polypeptide reads, in one-letter code: 6,7-dimethyl-8-ribityllumazine synthase (160 aa).

5-amino-6-(D-ribitylamino)uracil-binding positions include tryptophan 27, alanine 59 to glutamate 61, and valine 81 to isoleucine 83. Residue glutamate 86–threonine 87 coordinates (2S)-2-hydroxy-3-oxobutyl phosphate. Catalysis depends on histidine 89, which acts as the Proton donor. Asparagine 114 contributes to the 5-amino-6-(D-ribitylamino)uracil binding site. Residue arginine 128 coordinates (2S)-2-hydroxy-3-oxobutyl phosphate.

Belongs to the DMRL synthase family. Homopentamer.

It carries out the reaction (2S)-2-hydroxy-3-oxobutyl phosphate + 5-amino-6-(D-ribitylamino)uracil = 6,7-dimethyl-8-(1-D-ribityl)lumazine + phosphate + 2 H2O + H(+). It functions in the pathway cofactor biosynthesis; riboflavin biosynthesis; riboflavin from 2-hydroxy-3-oxobutyl phosphate and 5-amino-6-(D-ribitylamino)uracil: step 1/2. Its function is as follows. Catalyzes the formation of 6,7-dimethyl-8-ribityllumazine by condensation of 5-amino-6-(D-ribitylamino)uracil with 3,4-dihydroxy-2-butanone 4-phosphate. This is the penultimate step in the biosynthesis of riboflavin. The chain is 6,7-dimethyl-8-ribityllumazine synthase from Mycobacterium ulcerans (strain Agy99).